Reading from the N-terminus, the 219-residue chain is Phosphoribosylformylglycinamidine synthase subunit PurQ (219 aa).

The 218-residue stretch at 2-219 folds into the Glutamine amidotransferase type-1 domain; the sequence is KIAVITFPGS…KVVLDLILGS (218 aa). The active-site Nucleophile is the Cys86. Residues His195 and Glu197 contribute to the active site.

In terms of assembly, part of the FGAM synthase complex composed of 1 PurL, 1 PurQ and 2 PurS subunits.

It is found in the cytoplasm. The enzyme catalyses N(2)-formyl-N(1)-(5-phospho-beta-D-ribosyl)glycinamide + L-glutamine + ATP + H2O = 2-formamido-N(1)-(5-O-phospho-beta-D-ribosyl)acetamidine + L-glutamate + ADP + phosphate + H(+). It catalyses the reaction L-glutamine + H2O = L-glutamate + NH4(+). It participates in purine metabolism; IMP biosynthesis via de novo pathway; 5-amino-1-(5-phospho-D-ribosyl)imidazole from N(2)-formyl-N(1)-(5-phospho-D-ribosyl)glycinamide: step 1/2. Its function is as follows. Part of the phosphoribosylformylglycinamidine synthase complex involved in the purines biosynthetic pathway. Catalyzes the ATP-dependent conversion of formylglycinamide ribonucleotide (FGAR) and glutamine to yield formylglycinamidine ribonucleotide (FGAM) and glutamate. The FGAM synthase complex is composed of three subunits. PurQ produces an ammonia molecule by converting glutamine to glutamate. PurL transfers the ammonia molecule to FGAR to form FGAM in an ATP-dependent manner. PurS interacts with PurQ and PurL and is thought to assist in the transfer of the ammonia molecule from PurQ to PurL. This Leptospira interrogans serogroup Icterohaemorrhagiae serovar copenhageni (strain Fiocruz L1-130) protein is Phosphoribosylformylglycinamidine synthase subunit PurQ.